Reading from the N-terminus, the 352-residue chain is MLLLGIESSCDETGVALVETHGSALPQLRSHALHSQIAMHQAYGGVVPELASRDHIRRVLPLTEAVMAEAGRSLAEIDVVAYTRGPGLAGALLVGAGVACALGAALGKPVLGVHHLEGHLLSPFLSADPPEFPFVALLVSGGHTQLMRVDGVGRYELLGETIDDAAGEAFDKSAKLMGLPYPGGPWLAKLAEAGNPAAFKLPRPLLHSGDLDFSFAGLKTAVLTQAKKLGAELEANKADLAASTQAAIVEVLLKKSLAALGQTGLKRLVVAGGVGANRSLREQLNAACAKRGVRVHYPELHLCTDNGAMIAMAAAMRLQSGLAEASERYAFDVKPRWPMASLMASSAAPVAA.

His115 and His119 together coordinate Fe cation. Substrate contacts are provided by residues 138 to 142 (LVSGG), Asp171, Gly184, and Asn277. Asp305 lines the Fe cation pocket.

The protein belongs to the KAE1 / TsaD family. The cofactor is Fe(2+).

The protein localises to the cytoplasm. It catalyses the reaction L-threonylcarbamoyladenylate + adenosine(37) in tRNA = N(6)-L-threonylcarbamoyladenosine(37) in tRNA + AMP + H(+). In terms of biological role, required for the formation of a threonylcarbamoyl group on adenosine at position 37 (t(6)A37) in tRNAs that read codons beginning with adenine. Is involved in the transfer of the threonylcarbamoyl moiety of threonylcarbamoyl-AMP (TC-AMP) to the N6 group of A37, together with TsaE and TsaB. TsaD likely plays a direct catalytic role in this reaction. This Variovorax paradoxus (strain S110) protein is tRNA N6-adenosine threonylcarbamoyltransferase.